The primary structure comprises 342 residues: Peroxisomal membrane protein import receptor PEX19 (342 aa).

A compositionally biased stretch (acidic residues) spans 1–18 (MNENEYDNFDDLDDLLDE). Disordered regions lie at residues 1–68 (MNEN…DPEL) and 119–141 (CSSL…GFKN). The span at 41 to 54 (SENKEKNAESKDSD) shows a compositional bias: basic and acidic residues. The residue at position 62 (Ser-62) is a Phosphoserine. Ser-304 carries the post-translational modification Phosphoserine. The interval 321-342 (IDGNDPNLGNLDKELTDGCKQQ) is disordered. Residues 331-342 (LDKELTDGCKQQ) show a composition bias toward basic and acidic residues. Cysteine methyl ester is present on Cys-339. The S-farnesyl cysteine moiety is linked to residue Cys-339. Residues 340-342 (KQQ) constitute a propeptide, removed in mature form.

The protein belongs to the peroxin-19 family. As to quaternary structure, interacts (farnesylated) with PEX3; farnesylation is required for this interaction. Interacts with PEX2, PEX5, PEX10, PEX11, PEX12, PEX13, PEX14, PEX17, PEX22, PEX25, PEX30 and PEX32; the interaction requires well-defined PEX19-binding sites within the peroxisomal membrane protein targeting signal (mPTS) of the PMPs and is independent on the presence of PEX3. Interacts with VPS1.

The protein resides in the cytoplasm. The protein localises to the peroxisome membrane. Its subcellular location is the endoplasmic reticulum membrane. Required for proper post-translational import and stabilization of peroxisomal membrane proteins (PMPs). Acts as a cytosolic import receptor for PMPs and delivers them to the docking factor PEX3 at the peroxisomal membrane for subsequent insertion into the membrane. Acts as a chaperone in stabilizing or maintaining PMPs in the lipid bilayer. Directs PEX17, a peripheral component of the peroxisomal matrix protein translocation machinery, to peroxisomes. Stabilizes VPS1, a protein required for peroxisomal fission, at the peroxisomal membrane. Also acts in conjunction with PEX3 in the formation of peroxisomes from preperoxisomal compartments at the endoplasmic reticulum during de novo peroxisome synthesis, probably via the import of additional PMPs. This chain is Peroxisomal membrane protein import receptor PEX19 (PEX19), found in Saccharomyces cerevisiae (strain ATCC 204508 / S288c) (Baker's yeast).